A 208-amino-acid polypeptide reads, in one-letter code: ATP-dependent Clp protease proteolytic subunit (208 aa).

S106 (nucleophile) is an active-site residue. The active site involves H131.

Belongs to the peptidase S14 family. Fourteen ClpP subunits assemble into 2 heptameric rings which stack back to back to give a disk-like structure with a central cavity, resembling the structure of eukaryotic proteasomes.

It localises to the cytoplasm. The enzyme catalyses Hydrolysis of proteins to small peptides in the presence of ATP and magnesium. alpha-casein is the usual test substrate. In the absence of ATP, only oligopeptides shorter than five residues are hydrolyzed (such as succinyl-Leu-Tyr-|-NHMec, and Leu-Tyr-Leu-|-Tyr-Trp, in which cleavage of the -Tyr-|-Leu- and -Tyr-|-Trp bonds also occurs).. Functionally, cleaves peptides in various proteins in a process that requires ATP hydrolysis. Has a chymotrypsin-like activity. Plays a major role in the degradation of misfolded proteins. The sequence is that of ATP-dependent Clp protease proteolytic subunit from Roseobacter denitrificans (strain ATCC 33942 / OCh 114) (Erythrobacter sp. (strain OCh 114)).